The primary structure comprises 258 residues: Protein STAY-GREEN LIKE, chloroplastic (258 aa).

Belongs to the staygreen family. In terms of tissue distribution, strongly expressed in leaves, stems and panicles, and at lower levels in roots and seeds.

In terms of biological role, promotes chlorophyll degradation in leaves. May be involved in LHCI proteins degradation, regulating the balance between LHCI and LHCII. In Oryza sativa subsp. japonica (Rice), this protein is Protein STAY-GREEN LIKE, chloroplastic.